A 710-amino-acid chain; its full sequence is Prolyl endopeptidase (710 aa).

Met-1 carries the N-acetylmethionine modification. Position 157 is an N6-acetyllysine (Lys-157). Active-site charge relay system residues include Ser-554, Asp-641, and His-680.

Belongs to the peptidase S9A family. In terms of tissue distribution, expressed in all tissues tested: uterus, kidney, heart, lung, small intestine, smooth muscle, liver, spleen, thymus, adrenal, pituitary and whole brain.

It is found in the cytoplasm. It carries out the reaction Hydrolysis of Pro-|-Xaa &gt;&gt; Ala-|-Xaa in oligopeptides.. With respect to regulation, inhibited by DFP, Z-Pro-prolinal and poststatin, but not by PMSF, SBTI, EDTA, leupeptin, E-64 and pepstatin. Cleaves peptide bonds on the C-terminal side of prolyl residues within peptides that are up to approximately 30 amino acids long. Has high activity on the succinyl- (suc-) peptide-4-methylcoumaryl-7-amide (MCA) substrates suc-Gly-Pro-Leu-Gly-Pro-MCA, suc-Gly-Pro-MCA and suc-Ala-Ala-Ala-MCA. The polypeptide is Prolyl endopeptidase (Rattus norvegicus (Rat)).